The primary structure comprises 196 residues: 7-methyl-GTP pyrophosphatase (196 aa).

The active-site Proton acceptor is the aspartate 72.

It belongs to the Maf family. YceF subfamily. A divalent metal cation is required as a cofactor.

It is found in the cytoplasm. The catalysed reaction is N(7)-methyl-GTP + H2O = N(7)-methyl-GMP + diphosphate + H(+). Nucleoside triphosphate pyrophosphatase that hydrolyzes 7-methyl-GTP (m(7)GTP). May have a dual role in cell division arrest and in preventing the incorporation of modified nucleotides into cellular nucleic acids. This Neisseria meningitidis serogroup A / serotype 4A (strain DSM 15465 / Z2491) protein is 7-methyl-GTP pyrophosphatase.